Reading from the N-terminus, the 29-residue chain is Cycloviolacin-O22 (29 aa).

Residues 1-29 constitute a cross-link (cyclopeptide (Gly-Asn)); that stretch reads GLPICGETCVGGTCNTPGCTCSWPVCTRN. 3 disulfide bridges follow: C5-C19, C9-C21, and C14-C26.

In terms of processing, this is a cyclic peptide. As to expression, expressed in roots and runners but not in leaves, petals and petioles (at protein level).

Probably participates in a plant defense mechanism. In Viola odorata (Sweet violet), this protein is Cycloviolacin-O22.